A 166-amino-acid polypeptide reads, in one-letter code: Small ribosomal subunit protein uS4 (166 aa).

The S4 RNA-binding domain occupies 103 to 165; the sequence is RRLQTVVYKK…PTSPYFKKAQ (63 aa).

This sequence belongs to the universal ribosomal protein uS4 family. Part of the 30S ribosomal subunit. Contacts protein S5. The interaction surface between S4 and S5 is involved in control of translational fidelity.

In terms of biological role, one of the primary rRNA binding proteins, it binds directly to 16S rRNA where it nucleates assembly of the body of the 30S subunit. Functionally, with S5 and S12 plays an important role in translational accuracy. This chain is Small ribosomal subunit protein uS4, found in Ignicoccus hospitalis (strain KIN4/I / DSM 18386 / JCM 14125).